The following is a 318-amino-acid chain: NADH-quinone oxidoreductase subunit H 2 (318 aa).

9 helical membrane passes run 4–24 (LLIA…AGVF), 77–97 (LAPA…AFAP), 106–126 (VGVL…VLGA), 146–166 (LAYE…AGSF), 179–199 (LWFI…GLAA), 214–234 (LVAG…FLGE), 238–258 (ILLV…GPIL), 262–282 (VWFG…RAAL), and 293–313 (FAWK…AWIA).

This sequence belongs to the complex I subunit 1 family. NDH-1 is composed of 14 different subunits. Subunits NuoA, H, J, K, L, M, N constitute the membrane sector of the complex.

Its subcellular location is the cell inner membrane. It carries out the reaction a quinone + NADH + 5 H(+)(in) = a quinol + NAD(+) + 4 H(+)(out). Its function is as follows. NDH-1 shuttles electrons from NADH, via FMN and iron-sulfur (Fe-S) centers, to quinones in the respiratory chain. The immediate electron acceptor for the enzyme in this species is believed to be ubiquinone. Couples the redox reaction to proton translocation (for every two electrons transferred, four hydrogen ions are translocated across the cytoplasmic membrane), and thus conserves the redox energy in a proton gradient. This subunit may bind ubiquinone. The protein is NADH-quinone oxidoreductase subunit H 2 of Cereibacter sphaeroides (strain ATCC 17029 / ATH 2.4.9) (Rhodobacter sphaeroides).